A 90-amino-acid chain; its full sequence is Toxin 3FTx-Psa1 (90 aa).

The N-terminal stretch at 1–21 is a signal peptide; sequence MKTLPLVLAVVAFVYLDLAHT. Cystine bridges form between cysteine 24–cysteine 43, cysteine 36–cysteine 61, cysteine 65–cysteine 76, and cysteine 77–cysteine 82.

Belongs to the three-finger toxin family. Ancestral subfamily. Expressed by the venom gland.

Its subcellular location is the secreted. The protein is Toxin 3FTx-Psa1 of Psammophis mossambicus (Olive sand snake).